The following is a 259-amino-acid chain: F-box/kelch-repeat protein At2g22050 (259 aa).

A compositionally biased stretch (basic residues) spans 1-12; the sequence is MSPSSKKFKKQS. Residues 1–29 form a disordered region; the sequence is MSPSSKKFKKQSSSKSVKPPLEDNDPSLP. One can recognise an F-box domain in the interval 28–76; the sequence is LPSFTSLPDEIVLDCLQRVPRSYYLNLCRVSKTLRSLVRSPELSRLRTL. The stretch at 142-186 is one Kelch repeat; it reads EIYFVGGSFEPMSELWILDTRTGMFRQGPSMKVARTDEASVGVIN.

The chain is F-box/kelch-repeat protein At2g22050 from Arabidopsis thaliana (Mouse-ear cress).